The sequence spans 384 residues: Deoxyguanosinetriphosphate triphosphohydrolase-like protein (384 aa).

The HD domain occupies 62–198 (RLTHSLEVST…AALADDISYI (137 aa)).

Belongs to the dGTPase family. Type 2 subfamily.

This Rickettsia rickettsii (strain Iowa) protein is Deoxyguanosinetriphosphate triphosphohydrolase-like protein.